The chain runs to 228 residues: DNA repair protein RecO (228 aa).

The protein belongs to the RecO family.

Its function is as follows. Involved in DNA repair and RecF pathway recombination. The polypeptide is DNA repair protein RecO (Mannheimia succiniciproducens (strain KCTC 0769BP / MBEL55E)).